The following is a 409-amino-acid chain: Argininosuccinate synthase (409 aa).

Residues 11–19 (AYSGGLDTS) and Ala-38 contribute to the ATP site. Residues Tyr-91 and Ser-96 each contribute to the L-citrulline site. Position 121 (Gly-121) interacts with ATP. Positions 123, 127, and 128 each coordinate L-aspartate. Asn-127 is a binding site for L-citrulline. 5 residues coordinate L-citrulline: Arg-131, Ser-182, Ser-191, Glu-267, and Tyr-279.

This sequence belongs to the argininosuccinate synthase family. Type 1 subfamily. Homotetramer.

The protein resides in the cytoplasm. The catalysed reaction is L-citrulline + L-aspartate + ATP = 2-(N(omega)-L-arginino)succinate + AMP + diphosphate + H(+). The protein operates within amino-acid biosynthesis; L-arginine biosynthesis; L-arginine from L-ornithine and carbamoyl phosphate: step 2/3. This chain is Argininosuccinate synthase, found in Xanthobacter autotrophicus (strain ATCC BAA-1158 / Py2).